The sequence spans 403 residues: MATTAGLRDAAAPLEKIPLETYVPPAKPSLIGLSRAELAARLGDIGVPERQQKMRVQQLWHWLYFRGARSFDEMTSVSKDTRNGLAERFTVDRPEVVAEQISNDGTRKWLLRLPSGDDLQKAHEVECVYIPETDRGTLCVSSQVGCTLNCAFCHTGTQRLVRNLTAGEIVGQIMVARDRLNDWADRETPHGNRLITNIVMMGMGEPLYNFEAVRDALLIVSDNEGIGISRRRITLSTSGVVPNIKRAGEEIGVMLAISLHAVRDELRNELVPLNRKYPIAELLQACRDYPGASNARRITFEYVMLKGVNDSLDDARLLVKLLKGIPAKINLIPFNPWPGSAYECSDWEQIEKFSEYVFNAGYSSPVRTPRGRDILAACGQLKSETEKLSARERQALRAMAMTD.

Glutamate 126 (proton acceptor) is an active-site residue. In terms of domain architecture, Radical SAM core spans 132–375 (ETDRGTLCVS…VRTPRGRDIL (244 aa)). The cysteines at positions 139 and 378 are disulfide-linked. The [4Fe-4S] cluster site is built by cysteine 146, cysteine 150, and cysteine 153. S-adenosyl-L-methionine contacts are provided by residues 204-205 (GE), serine 236, 258-260 (SLH), and asparagine 335. Catalysis depends on cysteine 378, which acts as the S-methylcysteine intermediate.

Belongs to the radical SAM superfamily. RlmN family. [4Fe-4S] cluster is required as a cofactor.

Its subcellular location is the cytoplasm. The enzyme catalyses adenosine(2503) in 23S rRNA + 2 reduced [2Fe-2S]-[ferredoxin] + 2 S-adenosyl-L-methionine = 2-methyladenosine(2503) in 23S rRNA + 5'-deoxyadenosine + L-methionine + 2 oxidized [2Fe-2S]-[ferredoxin] + S-adenosyl-L-homocysteine. The catalysed reaction is adenosine(37) in tRNA + 2 reduced [2Fe-2S]-[ferredoxin] + 2 S-adenosyl-L-methionine = 2-methyladenosine(37) in tRNA + 5'-deoxyadenosine + L-methionine + 2 oxidized [2Fe-2S]-[ferredoxin] + S-adenosyl-L-homocysteine. Specifically methylates position 2 of adenine 2503 in 23S rRNA and position 2 of adenine 37 in tRNAs. m2A2503 modification seems to play a crucial role in the proofreading step occurring at the peptidyl transferase center and thus would serve to optimize ribosomal fidelity. The chain is Dual-specificity RNA methyltransferase RlmN from Bradyrhizobium sp. (strain ORS 278).